A 242-amino-acid chain; its full sequence is Type III pantothenate kinase (242 aa).

Residue 7–14 (DLGNSRFK) participates in ATP binding. Substrate is bound by residues Tyr91 and 98-101 (GVDR). Asp100 acts as the Proton acceptor in catalysis. Residue Thr121 coordinates ATP. Substrate is bound at residue Thr171.

Belongs to the type III pantothenate kinase family. In terms of assembly, homodimer. NH4(+) is required as a cofactor. The cofactor is K(+).

It localises to the cytoplasm. It carries out the reaction (R)-pantothenate + ATP = (R)-4'-phosphopantothenate + ADP + H(+). It functions in the pathway cofactor biosynthesis; coenzyme A biosynthesis; CoA from (R)-pantothenate: step 1/5. Functionally, catalyzes the phosphorylation of pantothenate (Pan), the first step in CoA biosynthesis. This is Type III pantothenate kinase from Xylella fastidiosa (strain M23).